The following is a 244-amino-acid chain: Phosphoadenosine 5'-phosphosulfate reductase (244 aa).

The active-site Nucleophile; cysteine thiosulfonate intermediate is Cys-239.

It belongs to the PAPS reductase family. CysH subfamily.

The protein localises to the cytoplasm. It catalyses the reaction [thioredoxin]-disulfide + sulfite + adenosine 3',5'-bisphosphate + 2 H(+) = [thioredoxin]-dithiol + 3'-phosphoadenylyl sulfate. The protein operates within sulfur metabolism; hydrogen sulfide biosynthesis; sulfite from sulfate: step 3/3. In terms of biological role, catalyzes the formation of sulfite from phosphoadenosine 5'-phosphosulfate (PAPS) using thioredoxin as an electron donor. This is Phosphoadenosine 5'-phosphosulfate reductase from Shigella boydii serotype 4 (strain Sb227).